The primary structure comprises 59 residues: Large ribosomal subunit protein bL32c (59 aa).

A disordered region spans residues 36-59; it reads KSRSFSGVSEHPKPKGFSRQQTNK.

The protein belongs to the bacterial ribosomal protein bL32 family.

The protein localises to the plastid. It is found in the chloroplast. This Oryza nivara (Indian wild rice) protein is Large ribosomal subunit protein bL32c.